The following is a 574-amino-acid chain: Proline--tRNA ligase (574 aa).

Belongs to the class-II aminoacyl-tRNA synthetase family. ProS type 1 subfamily. In terms of assembly, homodimer.

The protein localises to the cytoplasm. The catalysed reaction is tRNA(Pro) + L-proline + ATP = L-prolyl-tRNA(Pro) + AMP + diphosphate. Functionally, catalyzes the attachment of proline to tRNA(Pro) in a two-step reaction: proline is first activated by ATP to form Pro-AMP and then transferred to the acceptor end of tRNA(Pro). As ProRS can inadvertently accommodate and process non-cognate amino acids such as alanine and cysteine, to avoid such errors it has two additional distinct editing activities against alanine. One activity is designated as 'pretransfer' editing and involves the tRNA(Pro)-independent hydrolysis of activated Ala-AMP. The other activity is designated 'posttransfer' editing and involves deacylation of mischarged Ala-tRNA(Pro). The misacylated Cys-tRNA(Pro) is not edited by ProRS. The sequence is that of Proline--tRNA ligase from Fervidobacterium nodosum (strain ATCC 35602 / DSM 5306 / Rt17-B1).